Here is a 430-residue protein sequence, read N- to C-terminus: Carbamoyl phosphate synthase small chain, chloroplastic (430 aa).

The transit peptide at 1–35 (MAMATRTLGFVLPTSLSSQPSFDRRGGGFRVSVIR) directs the protein to the chloroplast. Residues 243–429 (KVIAYDFGIK…IELMKRSKQS (187 aa)) enclose the Glutamine amidotransferase type-1 domain. The Nucleophile role is filled by C318. Active-site residues include H402 and E404.

It belongs to the CarA family. In terms of assembly, heterodimer composed of 2 chains; the small (or glutamine) chain promotes the hydrolysis of glutamine to ammonia, which is used by the large (or ammonia) chain to synthesize carbamoyl phosphate.

It localises to the plastid. It is found in the chloroplast. The enzyme catalyses hydrogencarbonate + L-glutamine + 2 ATP + H2O = carbamoyl phosphate + L-glutamate + 2 ADP + phosphate + 2 H(+). The catalysed reaction is L-glutamine + H2O = L-glutamate + NH4(+). It functions in the pathway amino-acid biosynthesis; L-arginine biosynthesis; carbamoyl phosphate from bicarbonate: step 1/1. The protein operates within pyrimidine metabolism; UMP biosynthesis via de novo pathway; (S)-dihydroorotate from bicarbonate: step 1/3. Its function is as follows. Small subunit of the arginine-specific carbamoyl phosphate synthase (CPSase). CPSase catalyzes the formation of carbamoyl phosphate from the ammonia moiety of glutamine, carbonate, and phosphate donated by ATP, the first step of the arginine biosynthetic pathway. The small subunit (glutamine amidotransferase) binds and cleaves glutamine to supply the large subunit with the substrate ammonia. This Arabidopsis thaliana (Mouse-ear cress) protein is Carbamoyl phosphate synthase small chain, chloroplastic (CARA).